Consider the following 389-residue polypeptide: Large envelope protein (389 aa).

N-acetylmethionine is present on Met-1. Residue Gly-2 is the site of N-myristoyl glycine; by host attachment. The segment at 2-108 is pre-S1; it reads GQNLSTSNPL…PPLRDTHPQA (107 aa). The pre-S stretch occupies residues 2 to 163; the sequence is GQNLSTSNPL…FSRTGDPAPN (162 aa). The Virion surface; in external conformation segment spans residues 2 to 170; the sequence is GQNLSTSNPL…APNMESITSG (169 aa). The Intravirion; in internal conformation portion of the chain corresponds to 2–242; the sequence is GQNLSTSNPL…PGYRWMCLRR (241 aa). The segment at 73–99 is disordered; sequence IITTVPANPPPASTNRQSGRKPTPISP. A pre-S2 region spans residues 109–163; that stretch reads MHWNSTTFHQALQDPRVRGLYFPAGGSSSGTAYPVPDTASHISSIFSRTGDPAPN. A helical transmembrane segment spans residues 171–191; sequence FLGPLLVLQAGFFLLTKILTI. At 192-242 the chain is on the intravirion; in external conformation side; sequence PQSLDSWWTSLNFLGGAPVCLGQNSQSPTSNHSPTSCPPICPGYRWMCLRR. The chain crosses the membrane as a helical span at residues 243–263; it reads FIIFLFILLLCLIFLLVLLDY. Topologically, residues 264–337 are virion surface; that stretch reads QGMLPVCPLI…WASVRFSWLS (74 aa). Asn-309 is a glycosylation site (N-linked (GlcNAc...) asparagine; by host). A helical transmembrane segment spans residues 338-358; it reads LLAPFVQWFAGLSPTVWLSVI. Topologically, residues 359 to 364 are intravirion; it reads WMMWYW. Residues 365 to 387 traverse the membrane as a helical segment; that stretch reads GPNLYNILSPFIPLLPIFFCLWV. Residues 388–389 are Virion surface-facing; sequence YI.

The protein belongs to the orthohepadnavirus major surface antigen family. As to quaternary structure, in its internal form (Li-HBsAg), interacts with the capsid protein and with the isoform S. Interacts with host chaperone CANX. In terms of assembly, associates with host chaperone CANX through its pre-S2 N glycan; this association may be essential for isoform M proper secretion. Interacts with isoform L. Interacts with the antigens of satellite virus HDV (HDVAgs); this interaction is required for encapsidation of HDV genomic RNA. In terms of processing, isoform M is N-terminally acetylated by host at a ratio of 90%, and N-glycosylated by host at the pre-S2 region. Myristoylated.

It is found in the virion membrane. The large envelope protein exists in two topological conformations, one which is termed 'external' or Le-HBsAg and the other 'internal' or Li-HBsAg. In its external conformation the protein attaches the virus to cell receptors and thereby initiating infection. This interaction determines the species specificity and liver tropism. This attachment induces virion internalization predominantly through caveolin-mediated endocytosis. The large envelope protein also assures fusion between virion membrane and endosomal membrane. In its internal conformation the protein plays a role in virion morphogenesis and mediates the contact with the nucleocapsid like a matrix protein. In terms of biological role, the middle envelope protein plays an important role in the budding of the virion. It is involved in the induction of budding in a nucleocapsid independent way. In this process the majority of envelope proteins bud to form subviral lipoprotein particles of 22 nm of diameter that do not contain a nucleocapsid. The chain is Large envelope protein from Gorilla gorilla (western gorilla).